Here is a 418-residue protein sequence, read N- to C-terminus: Serine protease inhibitor A3N (418 aa).

The signal sequence occupies residues 1-29 (MTRLVTLELLMAGIGSALLCFPDCILGED). The residue at position 93 (S93) is a Phosphoserine. 3 N-linked (GlcNAc...) asparagine glycosylation sites follow: N104, N258, and N269. Residues 367-394 (GTEAAAATGVKFVPMSAKLDPLIIAFDR) are RCL.

It belongs to the serpin family. Post-translationally, N-glycosylated. In terms of tissue distribution, liver.

Its subcellular location is the secreted. The chain is Serine protease inhibitor A3N (Serpina3n) from Rattus norvegicus (Rat).